The following is a 215-amino-acid chain: NADH-quinone oxidoreductase subunit C (215 aa).

This sequence belongs to the complex I 30 kDa subunit family. As to quaternary structure, NDH-1 is composed of 14 different subunits. Subunits NuoB, C, D, E, F, and G constitute the peripheral sector of the complex.

The protein resides in the cell inner membrane. The catalysed reaction is a quinone + NADH + 5 H(+)(in) = a quinol + NAD(+) + 4 H(+)(out). In terms of biological role, NDH-1 shuttles electrons from NADH, via FMN and iron-sulfur (Fe-S) centers, to quinones in the respiratory chain. The immediate electron acceptor for the enzyme in this species is believed to be ubiquinone. Couples the redox reaction to proton translocation (for every two electrons transferred, four hydrogen ions are translocated across the cytoplasmic membrane), and thus conserves the redox energy in a proton gradient. The sequence is that of NADH-quinone oxidoreductase subunit C from Francisella philomiragia subsp. philomiragia (strain ATCC 25017 / CCUG 19701 / FSC 153 / O#319-036).